A 134-amino-acid polypeptide reads, in one-letter code: Large-conductance mechanosensitive channel (134 aa).

Helical transmembrane passes span 16–36 (VIDLAVAVVIGAAFGKIVTAL) and 81–101 (GDFLNTILQFIIIAFAIFIIV).

This sequence belongs to the MscL family. In terms of assembly, homopentamer.

It localises to the cell inner membrane. Functionally, channel that opens in response to stretch forces in the membrane lipid bilayer. May participate in the regulation of osmotic pressure changes within the cell. This chain is Large-conductance mechanosensitive channel, found in Xylella fastidiosa (strain M12).